The following is a 245-amino-acid chain: tRNA (guanine-N(1)-)-methyltransferase (245 aa).

S-adenosyl-L-methionine-binding positions include glycine 113 and 133 to 138; that span reads IGDYVL.

Belongs to the RNA methyltransferase TrmD family. In terms of assembly, homodimer.

It is found in the cytoplasm. It catalyses the reaction guanosine(37) in tRNA + S-adenosyl-L-methionine = N(1)-methylguanosine(37) in tRNA + S-adenosyl-L-homocysteine + H(+). Functionally, specifically methylates guanosine-37 in various tRNAs. This chain is tRNA (guanine-N(1)-)-methyltransferase, found in Actinobacillus succinogenes (strain ATCC 55618 / DSM 22257 / CCUG 43843 / 130Z).